The following is a 408-amino-acid chain: MSKFAVRKFYTSESVSEGHPDKLSDFISDSILDEFLRQEPTSRVAVETLVTTGMAVVAGEVRAHTAHVDIQKTVREAVQRVGYTRANYGFDAEYSAVLVAIHEQSPEIASGVDHSEEWREMSEAERQKPENAYSMVGAGDQGLMFGYATDETPELMPLPISLAHGLTRRLAELRKDGTLPYLRPDAKAQVTVVRNGEPHSATETAVDTIVISTQHSDDVTQEQIRADMLEHVIPAVIPAELLNEQTRYFINPSGRFVIGGPHGDTGLTGRKIIVDTYGGAVPHGGGAFSGKDPTKVDRSAAYYARYVAKNIVAAGLARRALVEIAYAIGRAHPVSLRVDTYGTGTVSDEKLDELIAAHFDARPQAIIAQLDLQRPIYAQTAAYGHFGRPEFPWEQTDRAQALKEAAQG.

Histidine 19 is an ATP binding site. Aspartate 21 is a binding site for Mg(2+). Glutamate 47 is a K(+) binding site. Glutamate 60 and glutamine 104 together coordinate L-methionine. A flexible loop region spans residues 104-114 (QSPEIASGVDH). Residues 185 to 187 (DAK), 255 to 256 (RF), aspartate 264, 270 to 271 (RK), alanine 287, and lysine 291 each bind ATP. Aspartate 264 is a binding site for L-methionine. Lysine 295 contacts L-methionine.

It belongs to the AdoMet synthase family. Homotetramer; dimer of dimers. Mg(2+) is required as a cofactor. The cofactor is K(+).

The protein localises to the cytoplasm. The catalysed reaction is L-methionine + ATP + H2O = S-adenosyl-L-methionine + phosphate + diphosphate. It functions in the pathway amino-acid biosynthesis; S-adenosyl-L-methionine biosynthesis; S-adenosyl-L-methionine from L-methionine: step 1/1. In terms of biological role, catalyzes the formation of S-adenosylmethionine (AdoMet) from methionine and ATP. The overall synthetic reaction is composed of two sequential steps, AdoMet formation and the subsequent tripolyphosphate hydrolysis which occurs prior to release of AdoMet from the enzyme. This Deinococcus radiodurans (strain ATCC 13939 / DSM 20539 / JCM 16871 / CCUG 27074 / LMG 4051 / NBRC 15346 / NCIMB 9279 / VKM B-1422 / R1) protein is S-adenosylmethionine synthase.